A 232-amino-acid polypeptide reads, in one-letter code: MASRKPNPDQLGLLLSQEPAAKRARRILCGVDEAGRGPLAGPVTAAAVVLNPRKPIKGLADSKILTARKREALYDEIVEKALAWHVAEATVEEIDRINILHATMLAMQRAVQGVAALGTLPDLVQVDGNRCPQVAFAVEAIVKGDALVPAISAASILAKVTRDRQLAALHIEFPLYGFDVHAGYGTPQHLAAIDLHGVTPHHRRSFAPVRRALEGMSAISIETVAAGSAWDD.

The region spanning Arg-26–Ala-218 is the RNase H type-2 domain. Residues Asp-32, Glu-33, and Asp-127 each contribute to the a divalent metal cation site.

The protein belongs to the RNase HII family. The cofactor is Mn(2+). Requires Mg(2+) as cofactor.

The protein resides in the cytoplasm. It catalyses the reaction Endonucleolytic cleavage to 5'-phosphomonoester.. Functionally, endonuclease that specifically degrades the RNA of RNA-DNA hybrids. The polypeptide is Ribonuclease HII (Ralstonia pickettii (strain 12J)).